The primary structure comprises 517 residues: ATP synthase subunit alpha (517 aa).

175–182 (GDRQTGKT) lines the ATP pocket.

It belongs to the ATPase alpha/beta chains family. In terms of assembly, F-type ATPases have 2 components, CF(1) - the catalytic core - and CF(0) - the membrane proton channel. CF(1) has five subunits: alpha(3), beta(3), gamma(1), delta(1), epsilon(1). CF(0) has three main subunits: a(1), b(2) and c(9-12). The alpha and beta chains form an alternating ring which encloses part of the gamma chain. CF(1) is attached to CF(0) by a central stalk formed by the gamma and epsilon chains, while a peripheral stalk is formed by the delta and b chains.

Its subcellular location is the cell membrane. It catalyses the reaction ATP + H2O + 4 H(+)(in) = ADP + phosphate + 5 H(+)(out). Functionally, produces ATP from ADP in the presence of a proton gradient across the membrane. The alpha chain is a regulatory subunit. This Herpetosiphon aurantiacus (strain ATCC 23779 / DSM 785 / 114-95) protein is ATP synthase subunit alpha.